The chain runs to 115 residues: DNA-binding protein PYRAB09250 (115 aa).

Belongs to the PDCD5 family.

This Pyrococcus abyssi (strain GE5 / Orsay) protein is DNA-binding protein PYRAB09250.